The sequence spans 195 residues: Inosine triphosphate pyrophosphatase (195 aa).

13–18 (TGNAKK) is a binding site for ITP. Glu43 contributes to the Mg(2+) binding site. Residues Lys55, 71–72 (DT), Lys88, 148–151 (FGWD), Lys171, and 176–177 (HR) contribute to the ITP site.

This sequence belongs to the HAM1 NTPase family. In terms of assembly, homodimer. Mg(2+) is required as a cofactor. Requires Mn(2+) as cofactor.

Its subcellular location is the cytoplasm. It carries out the reaction ITP + H2O = IMP + diphosphate + H(+). The enzyme catalyses dITP + H2O = dIMP + diphosphate + H(+). The catalysed reaction is XTP + H2O = XMP + diphosphate + H(+). It catalyses the reaction N(6)-hydroxy-dATP + H2O = N(6)-hydroxy-dAMP + diphosphate + H(+). Pyrophosphatase that hydrolyzes the non-canonical purine nucleotides inosine triphosphate (ITP), deoxyinosine triphosphate (dITP) as well as 2'-deoxy-N-6-hydroxylaminopurine triphosphate (dHAPTP) and xanthosine 5'-triphosphate (XTP) to their respective monophosphate derivatives. The enzyme does not distinguish between the deoxy- and ribose forms. Probably excludes non-canonical purines from RNA and DNA precursor pools, thus preventing their incorporation into RNA and DNA and avoiding chromosomal lesions. This chain is Inosine triphosphate pyrophosphatase (itpa), found in Xenopus laevis (African clawed frog).